A 274-amino-acid chain; its full sequence is Bis(5'-nucleosyl)-tetraphosphatase, symmetrical (274 aa).

This sequence belongs to the Ap4A hydrolase family.

The catalysed reaction is P(1),P(4)-bis(5'-adenosyl) tetraphosphate + H2O = 2 ADP + 2 H(+). Hydrolyzes diadenosine 5',5'''-P1,P4-tetraphosphate to yield ADP. The protein is Bis(5'-nucleosyl)-tetraphosphatase, symmetrical of Erwinia tasmaniensis (strain DSM 17950 / CFBP 7177 / CIP 109463 / NCPPB 4357 / Et1/99).